A 288-amino-acid chain; its full sequence is Bifunctional protein FolD (288 aa).

NADP(+) is bound by residues 166 to 168 (GRS), Ser-191, and Ile-232.

Belongs to the tetrahydrofolate dehydrogenase/cyclohydrolase family. Homodimer.

The enzyme catalyses (6R)-5,10-methylene-5,6,7,8-tetrahydrofolate + NADP(+) = (6R)-5,10-methenyltetrahydrofolate + NADPH. It catalyses the reaction (6R)-5,10-methenyltetrahydrofolate + H2O = (6R)-10-formyltetrahydrofolate + H(+). The protein operates within one-carbon metabolism; tetrahydrofolate interconversion. Catalyzes the oxidation of 5,10-methylenetetrahydrofolate to 5,10-methenyltetrahydrofolate and then the hydrolysis of 5,10-methenyltetrahydrofolate to 10-formyltetrahydrofolate. The protein is Bifunctional protein FolD of Rickettsia canadensis (strain McKiel).